A 152-amino-acid polypeptide reads, in one-letter code: Transcriptional regulator MraZ (152 aa).

SpoVT-AbrB domains follow at residues 5–52 (ASAI…PLHE) and 81–124 (AHEV…DEQA).

This sequence belongs to the MraZ family. In terms of assembly, forms oligomers.

Its subcellular location is the cytoplasm. It is found in the nucleoid. The protein is Transcriptional regulator MraZ of Shewanella sp. (strain MR-7).